The sequence spans 650 residues: 1-deoxy-D-xylulose-5-phosphate synthase 2 (650 aa).

Thiamine diphosphate is bound by residues His-79 and 120-122 (AHS). Asp-151 is a Mg(2+) binding site. Thiamine diphosphate contacts are provided by residues 152–153 (GS), Asn-180, Tyr-289, and Glu-371. Residue Asn-180 coordinates Mg(2+).

Belongs to the transketolase family. DXPS subfamily. As to quaternary structure, homodimer. The cofactor is Mg(2+). Thiamine diphosphate is required as a cofactor.

It catalyses the reaction D-glyceraldehyde 3-phosphate + pyruvate + H(+) = 1-deoxy-D-xylulose 5-phosphate + CO2. It participates in metabolic intermediate biosynthesis; 1-deoxy-D-xylulose 5-phosphate biosynthesis; 1-deoxy-D-xylulose 5-phosphate from D-glyceraldehyde 3-phosphate and pyruvate: step 1/1. In terms of biological role, catalyzes the acyloin condensation reaction between C atoms 2 and 3 of pyruvate and glyceraldehyde 3-phosphate to yield 1-deoxy-D-xylulose-5-phosphate (DXP). The sequence is that of 1-deoxy-D-xylulose-5-phosphate synthase 2 from Zymomonas mobilis subsp. mobilis (strain ATCC 31821 / ZM4 / CP4).